The following is a 482-amino-acid chain: ATP synthase subunit beta, chloroplastic (482 aa).

Residue 168–175 (GGAGVGKT) participates in ATP binding.

Belongs to the ATPase alpha/beta chains family. F-type ATPases have 2 components, CF(1) - the catalytic core - and CF(0) - the membrane proton channel. CF(1) has five subunits: alpha(3), beta(3), gamma(1), delta(1), epsilon(1). CF(0) has four main subunits: a(1), b(1), b'(1) and c(9-12).

Its subcellular location is the plastid. The protein localises to the chloroplast thylakoid membrane. The catalysed reaction is ATP + H2O + 4 H(+)(in) = ADP + phosphate + 5 H(+)(out). In terms of biological role, produces ATP from ADP in the presence of a proton gradient across the membrane. The catalytic sites are hosted primarily by the beta subunits. The chain is ATP synthase subunit beta, chloroplastic from Gnetum parvifolium (Small-leaved jointfir).